An 842-amino-acid chain; its full sequence is Amyloid-beta A4 precursor protein-binding family A member 1 (842 aa).

3 disordered regions span residues 1–121 (MNHL…DESA), 238–349 (RLHH…EKRD), and 366–439 (KTRT…KESR). S82 bears the Phosphoserine mark. 2 stretches are compositionally biased toward basic and acidic residues: residues 106–115 (DGYEAERAQD) and 240–258 (HHYDERSDGESDSPEKEAE). Phosphoserine is present on residues S246, S250, S252, S267, S284, and S289. T309 is modified (phosphothreonine). Phosphoserine occurs at positions 317 and 372. T375 is subject to Phosphothreonine. Basic and acidic residues predominate over residues 392 to 403 (PTRDCDDQRPVD). Residues 404 to 421 (GDSPSPGSSSPLGAESSS) show a composition bias toward low complexity. Residues S406, S408, S413, and S573 each carry the phosphoserine modification. One can recognise a PID domain in the interval 460 to 648 (LIDGIIFAAN…LLNTQDMYND (189 aa)). The autoinhibitory helix linker stretch occupies residues 631–648 (LSQKEYSDLLNTQDMYND). 2 PDZ domains span residues 661–746 (DVFI…NIVR) and 752–828 (TVLI…MPAA).

In terms of assembly, part of a multimeric complex containing STXBP1 and STX1A. Interacts with STXBP1. Component of the brain-specific heterotrimeric complex (LIN-10-LIN-2-LIN-7 complex) composed of at least APBA1, CASK, and LIN7, which associates with the motor protein KIF17 to transport vesicles along microtubules. Within the complex, interacts (via PDZ domain) with the motor protein KIF17; the interaction is direct and is required for association of KIF17 with the cargo that is to be transported. Binds to the cytoplasmic domain of amyloid protein (APP). Interacts (via PDZ 1 and 2 domains) with FSPB. Isoform 3 interacts (via its truncated PID domain) with active, GTP-bound RAB6A. Also interacts with GTP-bound RAB6B. Isoform 3 is expressed in brain.

Its subcellular location is the cytoplasm. The protein localises to the perinuclear region. The protein resides in the nucleus. It localises to the golgi apparatus. In terms of biological role, putative function in synaptic vesicle exocytosis by binding to Munc18-1, an essential component of the synaptic vesicle exocytotic machinery. May modulate processing of the amyloid-beta precursor protein (APP) and hence formation of AAP-beta. Component of the LIN-10-LIN-2-LIN-7 complex, which associates with the motor protein KIF17 to transport vesicles containing N-methyl-D-aspartate (NMDA) receptor subunit NR2B along microtubules. The protein is Amyloid-beta A4 precursor protein-binding family A member 1 of Mus musculus (Mouse).